An 852-amino-acid chain; its full sequence is DNA double-strand break repair Rad50 ATPase (852 aa).

Asparagine 32, glycine 33, alanine 34, glycine 35, lysine 36, serine 37, serine 38, arginine 53, tyrosine 54, aspartate 59, valine 61, and arginine 63 together coordinate ATP. Residue serine 37 coordinates Mg(2+). Glutamine 142 contributes to the Mg(2+) binding site. 2 coiled-coil regions span residues 155 to 345 (EITE…EELD) and 389 to 427 (LLSIEKTENETKNELEKLLDELSILKKDHMKWLAYQIAS). Positions 389-488 (LLSIEKTENE…SLSSLIEDLL (100 aa)) constitute a Zinc-hook domain. Zn(2+) is bound by residues cysteine 435 and cysteine 438. Coiled-coil stretches lie at residues 460–488 (DQKRSELENTLNVLKERKKSLSSLIEDLL) and 534–711 (KIEE…LFDK). Residue aspartate 797 participates in Mg(2+) binding.

It belongs to the SMC family. RAD50 subfamily. As to quaternary structure, homodimer. Forms a complex with Mre11. Requires Zn(2+) as cofactor.

It carries out the reaction ATP + H2O = ADP + phosphate + H(+). In terms of biological role, involved in DNA double-strand break repair (DSBR). The Rad50/Mre11 complex possesses single-strand endonuclease activity and ATP-dependent double-strand-specific 3'-5' exonuclease activity. Rad50 provides an ATP-dependent control of Mre11 by positioning DNA ends into the Mre11 active site: ATP-binding induces a large structural change from an open form with accessible Mre11 nuclease sites into a closed form. The polypeptide is DNA double-strand break repair Rad50 ATPase (Thermotoga maritima (strain ATCC 43589 / DSM 3109 / JCM 10099 / NBRC 100826 / MSB8)).